Reading from the N-terminus, the 156-residue chain is Small ribosomal subunit protein uS7 (156 aa).

It belongs to the universal ribosomal protein uS7 family. As to quaternary structure, part of the 30S ribosomal subunit. Contacts proteins S9 and S11.

In terms of biological role, one of the primary rRNA binding proteins, it binds directly to 16S rRNA where it nucleates assembly of the head domain of the 30S subunit. Is located at the subunit interface close to the decoding center, probably blocks exit of the E-site tRNA. The chain is Small ribosomal subunit protein uS7 from Bordetella petrii (strain ATCC BAA-461 / DSM 12804 / CCUG 43448).